The sequence spans 486 residues: Aspartyl/glutamyl-tRNA(Asn/Gln) amidotransferase subunit B (486 aa).

This sequence belongs to the GatB/GatE family. GatB subfamily. In terms of assembly, heterotrimer of A, B and C subunits.

The catalysed reaction is L-glutamyl-tRNA(Gln) + L-glutamine + ATP + H2O = L-glutaminyl-tRNA(Gln) + L-glutamate + ADP + phosphate + H(+). The enzyme catalyses L-aspartyl-tRNA(Asn) + L-glutamine + ATP + H2O = L-asparaginyl-tRNA(Asn) + L-glutamate + ADP + phosphate + 2 H(+). Allows the formation of correctly charged Asn-tRNA(Asn) or Gln-tRNA(Gln) through the transamidation of misacylated Asp-tRNA(Asn) or Glu-tRNA(Gln) in organisms which lack either or both of asparaginyl-tRNA or glutaminyl-tRNA synthetases. The reaction takes place in the presence of glutamine and ATP through an activated phospho-Asp-tRNA(Asn) or phospho-Glu-tRNA(Gln). The protein is Aspartyl/glutamyl-tRNA(Asn/Gln) amidotransferase subunit B of Orientia tsutsugamushi (strain Ikeda) (Rickettsia tsutsugamushi).